A 683-amino-acid polypeptide reads, in one-letter code: Protein kinase C eta type (683 aa).

In terms of domain architecture, C2 spans 1-118 (MSSGTMKFNG…LRTAGTSDTF (118 aa)). A phosphoserine mark is found at Ser28 and Ser32. Phorbol-ester/DAG-type zinc fingers lie at residues 171 to 222 (GHKF…VTAC) and 245 to 295 (PHKF…APNC). Ser317 carries the post-translational modification Phosphoserine. A Protein kinase domain is found at 355 to 614 (FEFIRVLGKG…EHEILRHPFF (260 aa)). Residues 361 to 369 (LGKGSFGKV) and Lys384 contribute to the ATP site. Asp479 serves as the catalytic Proton acceptor. A Phosphothreonine; by PDPK1 modification is found at Thr513. In terms of domain architecture, AGC-kinase C-terminal spans 615-683 (KEIDWVQLNH…FSYVSPELQP (69 aa)). Thr656 bears the Phosphothreonine mark. Position 675 is a phosphoserine (Ser675).

The protein belongs to the protein kinase superfamily. AGC Ser/Thr protein kinase family. PKC subfamily. In terms of assembly, interacts with FYN. Interacts with RALA. Interacts with DGKQ.

Its subcellular location is the cytoplasm. It carries out the reaction L-seryl-[protein] + ATP = O-phospho-L-seryl-[protein] + ADP + H(+). The catalysed reaction is L-threonyl-[protein] + ATP = O-phospho-L-threonyl-[protein] + ADP + H(+). Novel PKCs (PRKCD, PRKCE, PRKCH and PRKCQ) are calcium-insensitive, but activated by diacylglycerol (DAG) and phosphatidylserine. Three specific sites; Thr-513 (activation loop of the kinase domain), Thr-656 (turn motif) and Ser-675 (hydrophobic region), need to be phosphorylated for its full activation. In terms of biological role, calcium-independent, phospholipid- and diacylglycerol (DAG)-dependent serine/threonine-protein kinase that is involved in the regulation of cell differentiation in keratinocytes and pre-B cell receptor, mediates regulation of epithelial tight junction integrity and foam cell formation, and is required for glioblastoma proliferation and apoptosis prevention in MCF-7 cells. In keratinocytes, binds and activates the tyrosine kinase FYN, which in turn blocks epidermal growth factor receptor (EGFR) signaling and leads to keratinocyte growth arrest and differentiation. Associates with the cyclin CCNE1-CDK2-CDKN1B complex and inhibits CDK2 kinase activity, leading to RB1 dephosphorylation and thereby G1 arrest in keratinocytes. In association with RALA activates actin depolymerization, which is necessary for keratinocyte differentiation. In the pre-B cell receptor signaling, functions downstream of BLNK by up-regulating IRF4, which in turn activates L chain gene rearrangement. Regulates epithelial tight junctions (TJs) by phosphorylating occludin (OCLN) on threonine residues, which is necessary for the assembly and maintenance of TJs. In association with PLD2 and via TLR4 signaling, is involved in lipopolysaccharide (LPS)-induced RGS2 down-regulation and foam cell formation. Upon PMA stimulation, mediates glioblastoma cell proliferation by activating the mTOR pathway, the PI3K/AKT pathway and the ERK1-dependent phosphorylation of ELK1. Involved in the protection of glioblastoma cells from irradiation-induced apoptosis by preventing caspase-9 activation. In camptothecin-treated MCF-7 cells, regulates NF-kappa-B upstream signaling by activating IKBKB, and confers protection against DNA damage-induced apoptosis. Promotes oncogenic functions of ATF2 in the nucleus while blocking its apoptotic function at mitochondria. Phosphorylates ATF2 which promotes its nuclear retention and transcriptional activity and negatively regulates its mitochondrial localization. This Rattus norvegicus (Rat) protein is Protein kinase C eta type (Prkch).